Here is a 940-residue protein sequence, read N- to C-terminus: Valine--tRNA ligase (940 aa).

The 'HIGH' region signature appears at 47–57 (PNVTGILHMGH). The 'KMSKS' region motif lies at 564-568 (KLSKS). K567 contributes to the ATP binding site. Positions 873 to 937 (VEHIAKEKTR…ELQSILDKLA (65 aa)) form a coiled coil.

This sequence belongs to the class-I aminoacyl-tRNA synthetase family. ValS type 1 subfamily. As to quaternary structure, monomer.

It localises to the cytoplasm. The enzyme catalyses tRNA(Val) + L-valine + ATP = L-valyl-tRNA(Val) + AMP + diphosphate. Its function is as follows. Catalyzes the attachment of valine to tRNA(Val). As ValRS can inadvertently accommodate and process structurally similar amino acids such as threonine, to avoid such errors, it has a 'posttransfer' editing activity that hydrolyzes mischarged Thr-tRNA(Val) in a tRNA-dependent manner. This Chlamydia abortus (strain DSM 27085 / S26/3) (Chlamydophila abortus) protein is Valine--tRNA ligase.